Reading from the N-terminus, the 625-residue chain is Arginine--tRNA ligase (625 aa).

A 'HIGH' region motif is present at residues 128–138 (VNPTKPLHMGH).

Belongs to the class-I aminoacyl-tRNA synthetase family.

Its subcellular location is the cytoplasm. It carries out the reaction tRNA(Arg) + L-arginine + ATP = L-arginyl-tRNA(Arg) + AMP + diphosphate. The protein is Arginine--tRNA ligase (argS) of Pyrococcus abyssi (strain GE5 / Orsay).